A 442-amino-acid chain; its full sequence is Trigger factor (442 aa).

In terms of domain architecture, PPIase FKBP-type spans 162 to 247 (GDTVTIDYKG…IHEVKSKQLP (86 aa)).

This sequence belongs to the FKBP-type PPIase family. Tig subfamily.

It localises to the cytoplasm. It catalyses the reaction [protein]-peptidylproline (omega=180) = [protein]-peptidylproline (omega=0). In terms of biological role, involved in protein export. Acts as a chaperone by maintaining the newly synthesized protein in an open conformation. Functions as a peptidyl-prolyl cis-trans isomerase. This Lactobacillus acidophilus (strain ATCC 700396 / NCK56 / N2 / NCFM) protein is Trigger factor.